The following is a 238-amino-acid chain: Uridylate kinase (238 aa).

12–15 (KLSG) provides a ligand contact to ATP. Positions 20 to 25 (GDEGFG) are involved in allosteric activation by GTP. Gly54 contacts UMP. Gly55 and Arg59 together coordinate ATP. UMP contacts are provided by residues Asp74 and 135–142 (TGSPFFTT). 3 residues coordinate ATP: Thr162, Tyr168, and Asp171.

It belongs to the UMP kinase family. Homohexamer.

Its subcellular location is the cytoplasm. The enzyme catalyses UMP + ATP = UDP + ADP. The protein operates within pyrimidine metabolism; CTP biosynthesis via de novo pathway; UDP from UMP (UMPK route): step 1/1. Its activity is regulated as follows. Allosterically activated by GTP. Inhibited by UTP. Functionally, catalyzes the reversible phosphorylation of UMP to UDP. The chain is Uridylate kinase from Histophilus somni (strain 129Pt) (Haemophilus somnus).